Here is a 613-residue protein sequence, read N- to C-terminus: UBX domain-containing protein 3 (613 aa).

Disordered stretches follow at residues 67–223 and 453–472; these read PAAA…PINP and MNEQ…RNQQ. Over residues 68 to 82 the composition is skewed to low complexity; the sequence is AAASGRNAGASSSSR. Residues 137–149 show a composition bias toward basic residues; it reads THHRGAAIPRQKR. Residues 158-169 are compositionally biased toward low complexity; the sequence is SSSGSSSASFSS. The stretch at 452–517 forms a coiled coil; sequence RMNEQSERRE…EEEECVRRQT (66 aa). Residues 531-610 enclose the UBX domain; the sequence is PLAEIINVKF…KWPAREQIFV (80 aa). The Interaction with cdc-48 motif lies at 582–584; it reads FPK.

As to quaternary structure, forms a complex composed of ubxn-3, cdc-48.1, ufd-1 and npl-4.1. Forms a complex composed of ubxn-3, cdc-48.1 and/or cdc-48.2 and substrate cdt-1. Interacts (via FPK motif) with cdc-48.1 (via N-terminus) and cdc-48.2 (via N-terminus). Interacts (via N-terminus) with cdt-1 and ubiquitinated protein substrates; the interaction is cdc-48-independent. May interact with npl-4.1. Expressed in the germline (at protein level). Expressed in spermatocytes but not in mature sperm (at protein level). Expressed in the spermatheca and nerve cells.

The protein localises to the nucleus. The protein resides in the cytoplasm. It localises to the perinuclear region. It is found in the chromosome. In terms of biological role, ubiquitin-binding protein which acts as an adapter for ATPase cdc-48.1 and/or cdc-48.2, conferring substrate specificity. Together with ubxn-1 and ubxn-2, plays a role in hermaphrodite spermatogenesis probably by promoting the degradation of sex determination terminal factor tra-1. During mitosis, ensures the degradation of DNA licensing factor cdt-1 and the disassembly of the DNA replication CMG helicase complex by promoting the dissociation from chromatin of several of its components including cdc-45 and sld-5. The protein is UBX domain-containing protein 3 of Caenorhabditis elegans.